A 269-amino-acid polypeptide reads, in one-letter code: UPF0739 protein C1orf74 (269 aa).

It belongs to the UPF0739 family.

The chain is UPF0739 protein C1orf74 (C1orf74) from Homo sapiens (Human).